The primary structure comprises 561 residues: Efflux pump bfoC (561 aa).

The disordered stretch occupies residues 1–55 (MSDTARILGGPSASSSRDGGMELNSFTEVSQTNSRSHSTKEEEGQVDDQQRPARE). The segment covering 24-36 (NSFTEVSQTNSRS) has biased composition (polar residues). Basic and acidic residues predominate over residues 38–55 (STKEEEGQVDDQQRPARE). Transmembrane regions (helical) follow at residues 59-79 (GVLG…CIFC), 103-123 (DVGW…LTFG), 128-148 (FFPI…GSFI), 164-184 (VAGL…SQCV), 194-214 (GFIM…GGAF), 222-242 (WCFY…LFTF), 257-277 (AVGL…CLLL), 293-313 (VVAL…LQLW), 335-355 (LYGF…PIWF), 378-398 (VVFA…GPFM), 425-445 (IGYQ…PIFV), 457-477 (TATA…VSVA), and 530-550 (VHTF…ATVI).

This sequence belongs to the major facilitator superfamily. TCR/Tet family.

It is found in the cell membrane. In terms of biological role, efflux pump; part of the gene cluster that mediates the biosynthesis of bifonsecin B, a dimeric gamma-naphthopyrone. This is Efflux pump bfoC from Aspergillus brasiliensis (strain CBS 101740 / IMI 381727 / IBT 21946).